Here is a 350-residue protein sequence, read N- to C-terminus: Protein-glutamate methylesterase/protein-glutamine glutaminase 6 (350 aa).

Residues 11–126 enclose the Response regulatory domain; it reads RVLVVDDSAA…LAPVREELLE (116 aa). D62 is subject to 4-aspartylphosphate. The CheB-type methylesterase domain occupies 150–347; it reads ELEPARVAVV…ARLVEFARDA (198 aa). Residues S162, H189, and D289 contribute to the active site.

The protein belongs to the CheB family. Phosphorylated by CheA. Phosphorylation of the N-terminal regulatory domain activates the methylesterase activity.

The protein resides in the cytoplasm. The catalysed reaction is [protein]-L-glutamate 5-O-methyl ester + H2O = L-glutamyl-[protein] + methanol + H(+). The enzyme catalyses L-glutaminyl-[protein] + H2O = L-glutamyl-[protein] + NH4(+). In terms of biological role, involved in chemotaxis. Part of a chemotaxis signal transduction system that modulates chemotaxis in response to various stimuli. Catalyzes the demethylation of specific methylglutamate residues introduced into the chemoreceptors (methyl-accepting chemotaxis proteins or MCP) by CheR. Also mediates the irreversible deamidation of specific glutamine residues to glutamic acid. The chain is Protein-glutamate methylesterase/protein-glutamine glutaminase 6 from Anaeromyxobacter dehalogenans (strain 2CP-C).